We begin with the raw amino-acid sequence, 368 residues long: Alanine racemase (368 aa).

K34 serves as the catalytic Proton acceptor; specific for D-alanine. K34 carries the post-translational modification N6-(pyridoxal phosphate)lysine. R132 contributes to the substrate binding site. Residue Y261 is the Proton acceptor; specific for L-alanine of the active site. Residue M309 coordinates substrate.

It belongs to the alanine racemase family. It depends on pyridoxal 5'-phosphate as a cofactor.

The enzyme catalyses L-alanine = D-alanine. The protein operates within amino-acid biosynthesis; D-alanine biosynthesis; D-alanine from L-alanine: step 1/1. Catalyzes the interconversion of L-alanine and D-alanine. May also act on other amino acids. In Carboxydothermus hydrogenoformans (strain ATCC BAA-161 / DSM 6008 / Z-2901), this protein is Alanine racemase (alr).